The sequence spans 377 residues: PqqA peptide cyclase (377 aa).

The Radical SAM core domain occupies 12 to 228 (FGIPLAVLLE…EAARERLKGQ (217 aa)). Positions 26, 30, and 33 each coordinate [4Fe-4S] cluster.

It belongs to the radical SAM superfamily. PqqE family. In terms of assembly, interacts with PqqD. The interaction is necessary for activity of PqqE. The cofactor is [4Fe-4S] cluster.

It catalyses the reaction [PQQ precursor protein] + S-adenosyl-L-methionine = E-Y cross-linked-[PQQ precursor protein] + 5'-deoxyadenosine + L-methionine + H(+). Its pathway is cofactor biosynthesis; pyrroloquinoline quinone biosynthesis. Catalyzes the cross-linking of a glutamate residue and a tyrosine residue in the PqqA protein as part of the biosynthesis of pyrroloquinoline quinone (PQQ). This chain is PqqA peptide cyclase, found in Rhodopseudomonas palustris (strain ATCC BAA-98 / CGA009).